Reading from the N-terminus, the 440-residue chain is Probable D-serine dehydratase (440 aa).

Lys-111 is modified (N6-(pyridoxal phosphate)lysine).

The protein belongs to the serine/threonine dehydratase family. DsdA subfamily. Pyridoxal 5'-phosphate is required as a cofactor.

The enzyme catalyses D-serine = pyruvate + NH4(+). The chain is Probable D-serine dehydratase from Rhizobium leguminosarum bv. trifolii (strain WSM2304).